We begin with the raw amino-acid sequence, 428 residues long: MSAFIVLGAQWGDEGKGKMTDYLAQGADVVVRFQGGNNAGHTVEVEDKKYKLHLIPSGILYKNKVNVIGNGVVLDPKAMFEEVEYLKGMGVEVTPENLIVSDRAHLIMPYHRALDGASEKHRGKNDIGTTGKGIGPCYTDKAERSGIRVCDLLHPEVFKEKLKSNLEIKNAIITKVYGMDAFDYNEICEEYLAFGEKLKPFVKDTSVIVYNEIKNGKKVLFEGAQGNLLDIDYGTYPYVTSSNTIGGGVCPGAAIGPTMITSAVGIAKAYTTRVGKGPFPTELLDEMGDRIREAGFEYGVTTGRARRCGWLDTVILKQAARVSGLTSFAMTKIDTLAGIDKVKVCIGYDFNGKTIDYIPASLEDLALCKPIYEEFDGWDESVADARSYDELPLNAKKYLKRIEELTETKISIVSVGPERNHTIEVSDI.

GTP-binding positions include 12-18 and 40-42; these read GDEGKGK and GHT. D13 functions as the Proton acceptor in the catalytic mechanism. 2 residues coordinate Mg(2+): D13 and G40. IMP is bound by residues 13–16, 38–41, T130, R144, Q225, T240, and R304; these read DEGK and NAGH. H41 functions as the Proton donor in the catalytic mechanism. 300–306 provides a ligand contact to substrate; the sequence is VTTGRAR. GTP is bound by residues R306, 332-334, and 414-416; these read KID and SVG.

It belongs to the adenylosuccinate synthetase family. As to quaternary structure, homodimer. Mg(2+) is required as a cofactor.

It is found in the cytoplasm. The catalysed reaction is IMP + L-aspartate + GTP = N(6)-(1,2-dicarboxyethyl)-AMP + GDP + phosphate + 2 H(+). The protein operates within purine metabolism; AMP biosynthesis via de novo pathway; AMP from IMP: step 1/2. In terms of biological role, plays an important role in the de novo pathway of purine nucleotide biosynthesis. Catalyzes the first committed step in the biosynthesis of AMP from IMP. The protein is Adenylosuccinate synthetase of Clostridium acetobutylicum (strain ATCC 824 / DSM 792 / JCM 1419 / IAM 19013 / LMG 5710 / NBRC 13948 / NRRL B-527 / VKM B-1787 / 2291 / W).